Reading from the N-terminus, the 65-residue chain is Large ribosomal subunit protein bL35 (65 aa).

Belongs to the bacterial ribosomal protein bL35 family.

This is Large ribosomal subunit protein bL35 from Porphyromonas gingivalis (strain ATCC 33277 / DSM 20709 / CIP 103683 / JCM 12257 / NCTC 11834 / 2561).